Consider the following 391-residue polypeptide: Isochorismate synthase EntC (391 aa).

Mg(2+)-binding residues include threonine 140, threonine 142, valine 145, and aspartate 146. The Proton acceptor role is filled by lysine 147. The Proton donor role is filled by glutamate 197. 6 residues coordinate isochorismate: glycine 214, serine 215, glutamate 241, alanine 303, arginine 347, and glycine 361. Glutamate 241 is a Mg(2+) binding site. Glutamate 376 contacts Mg(2+). Lysine 380 is a binding site for isochorismate.

This sequence belongs to the isochorismate synthase family. As to quaternary structure, monomer. Forms a specific pairwise interaction with EntB; this interaction likely facilitates substrate channeling to connect the EntB and EntC active sites. Mg(2+) serves as cofactor.

It carries out the reaction chorismate = isochorismate. It functions in the pathway siderophore biosynthesis; enterobactin biosynthesis. In terms of biological role, involved in the biosynthesis of the siderophore enterobactin (macrocyclic trimeric lactone of N-(2,3-dihydroxybenzoyl)-serine). Catalyzes the reversible conversion of chorismate to isochorismate. In Escherichia coli O157:H7, this protein is Isochorismate synthase EntC.